Reading from the N-terminus, the 185-residue chain is Ribosome-recycling factor (185 aa).

This sequence belongs to the RRF family.

The protein resides in the cytoplasm. Responsible for the release of ribosomes from messenger RNA at the termination of protein biosynthesis. May increase the efficiency of translation by recycling ribosomes from one round of translation to another. The polypeptide is Ribosome-recycling factor (Vibrio campbellii (strain ATCC BAA-1116)).